We begin with the raw amino-acid sequence, 603 residues long: Serine palmitoyltransferase 2 (603 aa).

Residues 90–107 (YYYVVATYLTYLVLIIIG) form a helical membrane-spanning segment. The residue at position 398 (K398) is an N6-(pyridoxal phosphate)lysine.

This sequence belongs to the class-II pyridoxal-phosphate-dependent aminotransferase family. In terms of assembly, lcb1 and lcb2 encode essential subunits of the enzyme and form a heterodimer. Requires pyridoxal 5'-phosphate as cofactor.

The protein localises to the cytoplasm. Its subcellular location is the endoplasmic reticulum. The protein resides in the membrane. The catalysed reaction is L-serine + hexadecanoyl-CoA + H(+) = 3-oxosphinganine + CO2 + CoA. Its pathway is lipid metabolism; sphingolipid metabolism. Its function is as follows. Catalytic subunit of serine palmitoyltransferase (SPT), which catalyzes the committed step in the synthesis of sphingolipids, the condensation of serine with palmitoyl CoA to form the long chain base 3-ketosphinganine. The chain is Serine palmitoyltransferase 2 (lcb2) from Schizosaccharomyces pombe (strain 972 / ATCC 24843) (Fission yeast).